The chain runs to 819 residues: Phenylalanine--tRNA ligase beta subunit (819 aa).

Residues 42-154 (RGGLRGLVIG…SDAPVGMPAA (113 aa)) form the tRNA-binding domain. A B5 domain is found at 412–488 (LKPHLISLSF…RIYGYNQVEL (77 aa)). Asp-466, Asp-472, Glu-475, and Glu-476 together coordinate Mg(2+). The FDX-ACB domain maps to 726 to 819 (PRFPEVKRDL…LEQKLGAQLR (94 aa)).

It belongs to the phenylalanyl-tRNA synthetase beta subunit family. Type 1 subfamily. In terms of assembly, tetramer of two alpha and two beta subunits. The cofactor is Mg(2+).

It localises to the cytoplasm. The enzyme catalyses tRNA(Phe) + L-phenylalanine + ATP = L-phenylalanyl-tRNA(Phe) + AMP + diphosphate + H(+). The sequence is that of Phenylalanine--tRNA ligase beta subunit from Porphyromonas gingivalis (strain ATCC BAA-308 / W83).